A 439-amino-acid chain; its full sequence is 3-phosphoshikimate 1-carboxyvinyltransferase (439 aa).

Lys31, Ser32, and Arg36 together coordinate 3-phosphoshikimate. Lys31 serves as a coordination point for phosphoenolpyruvate. Gly103 and Arg131 together coordinate phosphoenolpyruvate. 3-phosphoshikimate-binding residues include Ser175, Gln177, Asp322, and Lys349. Gln177 serves as a coordination point for phosphoenolpyruvate. The active-site Proton acceptor is Asp322. Residues Arg353 and Arg397 each coordinate phosphoenolpyruvate.

It belongs to the EPSP synthase family. As to quaternary structure, monomer.

It localises to the cytoplasm. The enzyme catalyses 3-phosphoshikimate + phosphoenolpyruvate = 5-O-(1-carboxyvinyl)-3-phosphoshikimate + phosphate. Its pathway is metabolic intermediate biosynthesis; chorismate biosynthesis; chorismate from D-erythrose 4-phosphate and phosphoenolpyruvate: step 6/7. Its function is as follows. Catalyzes the transfer of the enolpyruvyl moiety of phosphoenolpyruvate (PEP) to the 5-hydroxyl of shikimate-3-phosphate (S3P) to produce enolpyruvyl shikimate-3-phosphate and inorganic phosphate. This chain is 3-phosphoshikimate 1-carboxyvinyltransferase, found in Clostridium tetani (strain Massachusetts / E88).